A 621-amino-acid chain; its full sequence is 1-deoxy-D-xylulose-5-phosphate synthase (621 aa).

Residues H76 and 117–119 (AHS) each bind thiamine diphosphate. D148 serves as a coordination point for Mg(2+). Residues 149 to 150 (GA), N178, Y285, and E367 contribute to the thiamine diphosphate site. N178 is a binding site for Mg(2+).

This sequence belongs to the transketolase family. DXPS subfamily. In terms of assembly, homodimer. The cofactor is Mg(2+). Requires thiamine diphosphate as cofactor.

It carries out the reaction D-glyceraldehyde 3-phosphate + pyruvate + H(+) = 1-deoxy-D-xylulose 5-phosphate + CO2. It participates in metabolic intermediate biosynthesis; 1-deoxy-D-xylulose 5-phosphate biosynthesis; 1-deoxy-D-xylulose 5-phosphate from D-glyceraldehyde 3-phosphate and pyruvate: step 1/1. Catalyzes the acyloin condensation reaction between C atoms 2 and 3 of pyruvate and glyceraldehyde 3-phosphate to yield 1-deoxy-D-xylulose-5-phosphate (DXP). The protein is 1-deoxy-D-xylulose-5-phosphate synthase of Aromatoleum aromaticum (strain DSM 19018 / LMG 30748 / EbN1) (Azoarcus sp. (strain EbN1)).